A 300-amino-acid chain; its full sequence is Inosose dehydratase (300 aa).

It belongs to the IolE/MocC family. It depends on glutathione as a cofactor. The cofactor is Co(2+). Requires Mn(2+) as cofactor.

It catalyses the reaction scyllo-inosose = 3D-3,5/4-trihydroxycyclohexane-1,2-dione + H2O. Catalyzes the dehydration of inosose (2-keto-myo-inositol, 2KMI or 2,4,6/3,5-pentahydroxycyclohexanone) to 3D-(3,5/4)-trihydroxycyclohexane-1,2-dione (D-2,3-diketo-4-deoxy-epi-inositol). The polypeptide is Inosose dehydratase (Mesomycoplasma hyopneumoniae (strain 232) (Mycoplasma hyopneumoniae)).